Here is a 227-residue protein sequence, read N- to C-terminus: Cytochrome c oxidase subunit 2 (227 aa).

At 1–14 the chain is on the mitochondrial intermembrane side; that stretch reads MAYPFQLGLQDATS. Residues 15 to 45 form a helical membrane-spanning segment; it reads PIMEELTNFHDHTLMIVFLISSLVLYIISLM. At 46–59 the chain is on the mitochondrial matrix side; sequence LTTKLTHTSTMDAQ. Residues 60-87 traverse the membrane as a helical segment; sequence EVETIWTILPAVILILIALPSLRILYMM. Topologically, residues 88–227 are mitochondrial intermembrane; that stretch reads DEINNPVLTV…YFENWSASMI (140 aa). 6 residues coordinate Cu cation: H161, C196, E198, C200, H204, and M207. E198 lines the Mg(2+) pocket. Y218 is modified (phosphotyrosine).

The protein belongs to the cytochrome c oxidase subunit 2 family. In terms of assembly, component of the cytochrome c oxidase (complex IV, CIV), a multisubunit enzyme composed of 14 subunits. The complex is composed of a catalytic core of 3 subunits MT-CO1, MT-CO2 and MT-CO3, encoded in the mitochondrial DNA, and 11 supernumerary subunits COX4I, COX5A, COX5B, COX6A, COX6B, COX6C, COX7A, COX7B, COX7C, COX8 and NDUFA4, which are encoded in the nuclear genome. The complex exists as a monomer or a dimer and forms supercomplexes (SCs) in the inner mitochondrial membrane with NADH-ubiquinone oxidoreductase (complex I, CI) and ubiquinol-cytochrome c oxidoreductase (cytochrome b-c1 complex, complex III, CIII), resulting in different assemblies (supercomplex SCI(1)III(2)IV(1) and megacomplex MCI(2)III(2)IV(2)). Found in a complex with TMEM177, COA6, COX18, COX20, SCO1 and SCO2. Interacts with TMEM177 in a COX20-dependent manner. Interacts with COX20. Interacts with COX16. Cu cation is required as a cofactor.

The protein resides in the mitochondrion inner membrane. It carries out the reaction 4 Fe(II)-[cytochrome c] + O2 + 8 H(+)(in) = 4 Fe(III)-[cytochrome c] + 2 H2O + 4 H(+)(out). Component of the cytochrome c oxidase, the last enzyme in the mitochondrial electron transport chain which drives oxidative phosphorylation. The respiratory chain contains 3 multisubunit complexes succinate dehydrogenase (complex II, CII), ubiquinol-cytochrome c oxidoreductase (cytochrome b-c1 complex, complex III, CIII) and cytochrome c oxidase (complex IV, CIV), that cooperate to transfer electrons derived from NADH and succinate to molecular oxygen, creating an electrochemical gradient over the inner membrane that drives transmembrane transport and the ATP synthase. Cytochrome c oxidase is the component of the respiratory chain that catalyzes the reduction of oxygen to water. Electrons originating from reduced cytochrome c in the intermembrane space (IMS) are transferred via the dinuclear copper A center (CU(A)) of subunit 2 and heme A of subunit 1 to the active site in subunit 1, a binuclear center (BNC) formed by heme A3 and copper B (CU(B)). The BNC reduces molecular oxygen to 2 water molecules using 4 electrons from cytochrome c in the IMS and 4 protons from the mitochondrial matrix. This chain is Cytochrome c oxidase subunit 2, found in Rattus norvegicus (Rat).